The primary structure comprises 155 residues: Fibroblast growth factor 1 (155 aa).

The residue at position 2 (A2) is an N-acetylalanine. The propeptide occupies 2–15; it reads AEGEITTFSALTER. N33 provides a ligand contact to heparin. Residues 127–143 form a heparin-binding region; sequence KKNGSCKRGPRTHYGQK.

Belongs to the heparin-binding growth factors family. In terms of assembly, monomer. Homodimer. Interacts with FGFR1, FGFR2, FGFR3 and FGFR4. Affinity between fibroblast growth factors (FGFs) and their receptors is increased by heparan sulfate glycosaminoglycans that function as coreceptors. Found in a complex with FGFBP1, FGF1 and FGF2. Interacts with FGFBP1. Part of a Cu(2+)-dependent multiprotein aggregate containing FGF1, S100A13 and SYT1. Interacts with SYT1. Interacts with S100A13. Interacts with LRRC59. Interacts with CSNKA, CSNKB and FIBP. While binding with LRRC59, CSNKA and FIBP seem mutually exclusive, CSNKB and FIBP may cooperatively interact with FGF1. Forms a ternary complex with FGFR1 and ITGAV:ITGB3 and induces the recruitment of PTPN11 to the complex. In the nucleus, phosphorylated by PKC/PRKCD.

The protein resides in the secreted. It is found in the cytoplasm. The protein localises to the cell cortex. It localises to the cytosol. Its subcellular location is the nucleus. Functionally, plays an important role in the regulation of cell survival, cell division, angiogenesis, cell differentiation and cell migration. Functions as a potent mitogen in vitro. Acts as a ligand for FGFR1 and integrins. Binds to FGFR1 in the presence of heparin leading to FGFR1 dimerization and activation via sequential autophosphorylation on tyrosine residues which act as docking sites for interacting proteins, leading to the activation of several signaling cascades. Binds to integrin ITGAV:ITGB3. Its binding to integrin, subsequent ternary complex formation with integrin and FGFR1, and the recruitment of PTPN11 to the complex are essential for FGF1 signaling. Induces the phosphorylation and activation of FGFR1, FRS2, MAPK3/ERK1, MAPK1/ERK2 and AKT1. Can induce angiogenesis. The chain is Fibroblast growth factor 1 (FGF1) from Mesocricetus auratus (Golden hamster).